We begin with the raw amino-acid sequence, 333 residues long: Anthranilate phosphoribosyltransferase (333 aa).

5-phospho-alpha-D-ribose 1-diphosphate is bound by residues G81, 84–85 (GD), T89, 91–94 (NIST), 109–117 (KHGNRSVSS), and A121. An anthranilate-binding site is contributed by G81. S93 serves as a coordination point for Mg(2+). Position 112 (N112) interacts with anthranilate. R167 lines the anthranilate pocket. Mg(2+) is bound by residues D225 and E226.

This sequence belongs to the anthranilate phosphoribosyltransferase family. Homodimer. Requires Mg(2+) as cofactor.

The catalysed reaction is N-(5-phospho-beta-D-ribosyl)anthranilate + diphosphate = 5-phospho-alpha-D-ribose 1-diphosphate + anthranilate. Its pathway is amino-acid biosynthesis; L-tryptophan biosynthesis; L-tryptophan from chorismate: step 2/5. Catalyzes the transfer of the phosphoribosyl group of 5-phosphorylribose-1-pyrophosphate (PRPP) to anthranilate to yield N-(5'-phosphoribosyl)-anthranilate (PRA). This is Anthranilate phosphoribosyltransferase from Haemophilus influenzae (strain 86-028NP).